Here is an 85-residue protein sequence, read N- to C-terminus: Large ribosomal subunit protein bL27 (85 aa).

The interval 1 to 20 is disordered; the sequence is MATKKAGGSTRNGRDSEAKR.

It belongs to the bacterial ribosomal protein bL27 family.

The sequence is that of Large ribosomal subunit protein bL27 from Glaesserella parasuis serovar 5 (strain SH0165) (Haemophilus parasuis).